A 151-amino-acid chain; its full sequence is Ribonuclease H (151 aa).

The RNase H type-1 domain occupies 1–146 (MSDLFAYTDG…ADELARAGMA (146 aa)). 4 residues coordinate Mg(2+): aspartate 9, glutamate 52, aspartate 74, and aspartate 138.

The protein belongs to the RNase H family. In terms of assembly, monomer. The cofactor is Mg(2+).

The protein localises to the cytoplasm. The catalysed reaction is Endonucleolytic cleavage to 5'-phosphomonoester.. Functionally, endonuclease that specifically degrades the RNA of RNA-DNA hybrids. This Cereibacter sphaeroides (strain ATCC 17025 / ATH 2.4.3) (Rhodobacter sphaeroides) protein is Ribonuclease H.